The primary structure comprises 1020 residues: Sodium/potassium-transporting ATPase subunit alpha-2 (1020 aa).

The propeptide occupies 1 to 5; sequence MGRGA. The disordered stretch occupies residues 1–31; sequence MGRGAGREYSPAATTAENGGGKKKQKEKELD. The Cytoplasmic segment spans residues 6-85; sequence GREYSPAATT…NALTPPPTTP (80 aa). The residue at position 10 (Ser-10) is a Phosphoserine. An interaction with phosphoinositide-3 kinase region spans residues 80-82; sequence PPP. Residues 86-106 form a helical membrane-spanning segment; sequence EWVKFCRQLFGGFSILLWIGA. The Extracellular portion of the chain corresponds to 107–129; the sequence is ILCFLAYGIQAAMEDEPSNDNLY. The chain crosses the membrane as a helical span at residues 130–150; that stretch reads LGVVLAAVVIVTGCFSYYQEA. The Cytoplasmic segment spans residues 151-286; the sequence is KSSKIMDSFK…VGRTPIAMEI (136 aa). Positions 212-227 are enriched in polar residues; the sequence is DNSSLTGESEPQTRSP. The tract at residues 212 to 231 is disordered; that stretch reads DNSSLTGESEPQTRSPEFTH. A helical membrane pass occupies residues 287 to 306; it reads EHFIQLITGVAVFLGVSFFV. Topologically, residues 307 to 318 are extracellular; the sequence is LSLILGYSWLEA. A helical transmembrane segment spans residues 319–336; that stretch reads VIFLIGIIVANVPEGLLA. The Cytoplasmic portion of the chain corresponds to 337-769; the sequence is TVTVCLTLTA…EEGRLIFDNL (433 aa). The active-site 4-aspartylphosphate intermediate is Asp-374. A phosphoserine mark is found at Ser-439, Ser-450, Ser-496, and Ser-559. Position 570 is a phosphothreonine (Thr-570). Residues Ser-587 and Ser-672 each carry the phosphoserine modification. Positions 714 and 718 each coordinate Mg(2+). The chain crosses the membrane as a helical span at residues 770–789; sequence KKSIAYTLTSNIPEITPFLL. The Extracellular segment spans residues 790–799; sequence FIIANIPLPL. Residues 800–820 traverse the membrane as a helical segment; it reads GTVTILCIDLGTDMVPAISLA. Over 821 to 840 the chain is Cytoplasmic; that stretch reads YEAAESDIMKRQPRNSQTDK. The residue at position 826 (Ser-826) is a Phosphoserine. A helical transmembrane segment spans residues 841–863; it reads LVNERLISMAYGQIGMIQALGGF. Topologically, residues 864-915 are extracellular; the sequence is FTYFVILAENGFLPSRLLGIRLDWDDRTMNDLEDSYGQEWTYEQRKVVEFTC. Residues 916–935 form a helical membrane-spanning segment; the sequence is HTAFFASIVVVQWADLIICK. The Cytoplasmic portion of the chain corresponds to 936–948; that stretch reads TRRNSVFQQGMKN. Ser-940 carries the post-translational modification Phosphoserine; by PKA. Residues 949 to 967 form a helical membrane-spanning segment; it reads KILIFGLLEETALAAFLSY. The Extracellular segment spans residues 968 to 982; the sequence is CPGMGVALRMYPLKV. A helical transmembrane segment spans residues 983 to 1003; the sequence is TWWFCAFPYSLLIFIYDEVRK. Over 1004 to 1020 the chain is Cytoplasmic; sequence LILRRYPGGWVEKETYY.

This sequence belongs to the cation transport ATPase (P-type) (TC 3.A.3) family. Type IIC subfamily. The sodium/potassium-transporting ATPase is composed of a catalytic alpha subunit, an auxiliary non-catalytic beta subunit and an additional regulatory subunit. Interacts with regulatory subunit FXYD1.

The protein resides in the membrane. It is found in the cell membrane. The enzyme catalyses K(+)(out) + Na(+)(in) + ATP + H2O = K(+)(in) + Na(+)(out) + ADP + phosphate + H(+). Its function is as follows. This is the catalytic component of the active enzyme, which catalyzes the hydrolysis of ATP coupled with the exchange of sodium and potassium ions across the plasma membrane. This action creates the electrochemical gradient of sodium and potassium, providing the energy for active transport of various nutrients. The sequence is that of Sodium/potassium-transporting ATPase subunit alpha-2 (ATP1A2) from Homo sapiens (Human).